Consider the following 407-residue polypeptide: Protein RecA (407 aa).

Position 79–86 (79–86 (GPESSGKT)) interacts with ATP. Positions 358–407 (LSLEASPEESDAKTLRRXASRGAGASSSRVQEGSAANDHFQDESTTAKLL) are disordered. Residues 377–386 (SRGAGASSSR) are compositionally biased toward low complexity.

The protein belongs to the RecA family.

It localises to the cytoplasm. In terms of biological role, can catalyze the hydrolysis of ATP in the presence of single-stranded DNA, the ATP-dependent uptake of single-stranded DNA by duplex DNA, and the ATP-dependent hybridization of homologous single-stranded DNAs. It interacts with LexA causing its activation and leading to its autocatalytic cleavage. In Treponema pallidum (strain Nichols), this protein is Protein RecA.